A 1692-amino-acid chain; its full sequence is Adenylate cyclase (1692 aa).

2 disordered regions span residues 1–22 and 103–142; these read MDQS…FKTG and SLSD…YKEN. Residues 120–132 are compositionally biased toward basic and acidic residues; that stretch reads ESSEKSEVPRDTR. Positions 174 to 195 are required for interaction with gpa2; the sequence is FTNLTFPEPISDDSDSVEFQRD. Residues 292–380 enclose the Ras-associating domain; that stretch reads KEFFLRVYRD…SDEEINEEDN (89 aa). LRR repeat units follow at residues 430–450, 454–474, 477–498, 503–524, 526–547, 549–570, 572–594, 596–617, 618–639, 660–681, 684–705, 707–729, 730–751, 753–774, 783–805, 807–827, 831–852, 855–876, 878–899, 901–922, and 930–951; these read ELIS…DFME, KLKR…PITA, QLEV…IFSG, SLKE…TRYL, NLTY…ITEL, QLET…IGSL, KLKH…IGLL, NLET…SECP, KLNS…NPSA, NLVY…VIET, NVET…ISAM, NLKY…GKLK, HLVH…VWQV, SLKV…VATS, QLKI…EFVM, TVEE…TALE, CLKV…FFQN, DLKH…STAQ, LLET…EALS, SLRF…KAEK, and QLEY…EDTN. Positions 995–1275 constitute a PPM-type phosphatase domain; sequence RYGVCGYLSR…KNVLVVIVEL (281 aa). A Guanylate cyclase domain is found at 1332-1469; that stretch reads AMVFTDIKNS…PVVNRTSRVV (138 aa). 2 residues coordinate Mg(2+): aspartate 1337 and aspartate 1380. The Mn(2+) site is built by aspartate 1337 and aspartate 1380. Over residues 1585–1597 the composition is skewed to basic and acidic residues; sequence SDSKSVHGEEGGS. Residues 1585 to 1614 form a disordered region; that stretch reads SDSKSVHGEEGGSGKRSVSSLRNVSPSEST. Positions 1600 to 1614 are enriched in polar residues; that stretch reads RSVSSLRNVSPSEST.

The protein belongs to the adenylyl cyclase class-3 family. As to quaternary structure, interacts (via N-terminus) with gpa2; the interaction is direct and serves to activate adenylate cyclase and cAMP-PKA signaling, to repress sexual development and gluconeogenesis. Interacts with git1. Mn(2+) is required as a cofactor.

Its subcellular location is the cytoplasm. The enzyme catalyses ATP = 3',5'-cyclic AMP + diphosphate. With respect to regulation, activated by binding G protein gpa2. Activated by git1. In contrast to yeast cyclase, S.pombe cyclase is not likely to be regulated by RAS proteins. Its function is as follows. Acts in glucose-induced cAMP signaling by catalyzing the synthesis of the second messenger, cAMP to activate PKA signaling and repress sexual development and gluconeogenesis. This Schizosaccharomyces pombe (strain 972 / ATCC 24843) (Fission yeast) protein is Adenylate cyclase.